We begin with the raw amino-acid sequence, 107 residues long: UPF0122 protein STH1464 (107 aa).

This sequence belongs to the UPF0122 family.

Functionally, might take part in the signal recognition particle (SRP) pathway. This is inferred from the conservation of its genetic proximity to ftsY/ffh. May be a regulatory protein. The protein is UPF0122 protein STH1464 of Symbiobacterium thermophilum (strain DSM 24528 / JCM 14929 / IAM 14863 / T).